The chain runs to 141 residues: VLSPADKNNVKSAWNAIGSHAGEHGAEALERMFLSFPPTKTYFPHFDLSHGSAQIKTHGKKVADALTNAVNHIDDMPGALSALSDLHAHKLRVDPVNFKLLSHCLLVTLASHHPAEFTPAVHASLDKFFAAVSTVLTSKYR.

The 141-residue stretch at Val1–Arg141 folds into the Globin domain. His58 serves as a coordination point for O2. His87 serves as a coordination point for heme b.

Belongs to the globin family. In terms of assembly, heterotetramer of two alpha chains and two beta chains. As to expression, red blood cells.

Functionally, involved in oxygen transport from the lung to the various peripheral tissues. In Varecia variegata (Black-and-white ruffed lemur), this protein is Hemoglobin subunit alpha-1.